The following is a 141-amino-acid chain: Large ribosomal subunit protein uL11 (141 aa).

The protein belongs to the universal ribosomal protein uL11 family. As to quaternary structure, part of the ribosomal stalk of the 50S ribosomal subunit. Interacts with L10 and the large rRNA to form the base of the stalk. L10 forms an elongated spine to which L12 dimers bind in a sequential fashion forming a multimeric L10(L12)X complex. One or more lysine residues are methylated.

Functionally, forms part of the ribosomal stalk which helps the ribosome interact with GTP-bound translation factors. This is Large ribosomal subunit protein uL11 from Synechococcus sp. (strain RCC307).